A 1400-amino-acid polypeptide reads, in one-letter code: DNA-directed RNA polymerase subunit beta' (1400 aa).

Zn(2+) contacts are provided by Cys-70, Cys-72, Cys-85, and Cys-88. Positions 460, 462, and 464 each coordinate Mg(2+). Zn(2+)-binding residues include Cys-814, Cys-888, Cys-895, and Cys-898. Positions 1368-1400 (RQAKRAEAQEGPSAEQATDNLAALLNAGFSSDE) are disordered.

Belongs to the RNA polymerase beta' chain family. The RNAP catalytic core consists of 2 alpha, 1 beta, 1 beta' and 1 omega subunit. When a sigma factor is associated with the core the holoenzyme is formed, which can initiate transcription. The cofactor is Mg(2+). Requires Zn(2+) as cofactor.

It catalyses the reaction RNA(n) + a ribonucleoside 5'-triphosphate = RNA(n+1) + diphosphate. Its function is as follows. DNA-dependent RNA polymerase catalyzes the transcription of DNA into RNA using the four ribonucleoside triphosphates as substrates. The protein is DNA-directed RNA polymerase subunit beta' of Vibrio parahaemolyticus serotype O3:K6 (strain RIMD 2210633).